A 452-amino-acid chain; its full sequence is Probable glycine dehydrogenase (decarboxylating) subunit 1 (452 aa).

It belongs to the GcvP family. N-terminal subunit subfamily. In terms of assembly, the glycine cleavage system is composed of four proteins: P, T, L and H. In this organism, the P 'protein' is a heterodimer of two subunits.

It catalyses the reaction N(6)-[(R)-lipoyl]-L-lysyl-[glycine-cleavage complex H protein] + glycine + H(+) = N(6)-[(R)-S(8)-aminomethyldihydrolipoyl]-L-lysyl-[glycine-cleavage complex H protein] + CO2. Its function is as follows. The glycine cleavage system catalyzes the degradation of glycine. The P protein binds the alpha-amino group of glycine through its pyridoxal phosphate cofactor; CO(2) is released and the remaining methylamine moiety is then transferred to the lipoamide cofactor of the H protein. The sequence is that of Probable glycine dehydrogenase (decarboxylating) subunit 1 from Alcanivorax borkumensis (strain ATCC 700651 / DSM 11573 / NCIMB 13689 / SK2).